Here is a 356-residue protein sequence, read N- to C-terminus: 3-dehydroquinate synthase (356 aa).

NAD(+) contacts are provided by residues 69–74 (DGEKFK), 103–107 (GVIGD), 127–128 (TT), K140, K149, and 167–170 (CLKT). Zn(2+) is bound by residues E182, H245, and H262.

Belongs to the sugar phosphate cyclases superfamily. Dehydroquinate synthase family. Co(2+) is required as a cofactor. Zn(2+) serves as cofactor. Requires NAD(+) as cofactor.

The protein resides in the cytoplasm. It catalyses the reaction 7-phospho-2-dehydro-3-deoxy-D-arabino-heptonate = 3-dehydroquinate + phosphate. It participates in metabolic intermediate biosynthesis; chorismate biosynthesis; chorismate from D-erythrose 4-phosphate and phosphoenolpyruvate: step 2/7. In terms of biological role, catalyzes the conversion of 3-deoxy-D-arabino-heptulosonate 7-phosphate (DAHP) to dehydroquinate (DHQ). The polypeptide is 3-dehydroquinate synthase (Psychromonas ingrahamii (strain DSM 17664 / CCUG 51855 / 37)).